The following is a 213-amino-acid chain: StAR-related lipid transfer protein 5 (213 aa).

In terms of domain architecture, START spans 1–213; the sequence is MDLATAAQVS…LEKAVKKFFG (213 aa).

Functionally, may be involved in the intracellular transport of sterols or other lipids. May bind cholesterol or other sterols. The polypeptide is StAR-related lipid transfer protein 5 (STARD5) (Bos taurus (Bovine)).